The chain runs to 469 residues: 3-isopropylmalate dehydratase large subunit (469 aa).

[4Fe-4S] cluster-binding residues include cysteine 347, cysteine 410, and cysteine 413.

The protein belongs to the aconitase/IPM isomerase family. LeuC type 1 subfamily. As to quaternary structure, heterodimer of LeuC and LeuD. Requires [4Fe-4S] cluster as cofactor.

It catalyses the reaction (2R,3S)-3-isopropylmalate = (2S)-2-isopropylmalate. Its pathway is amino-acid biosynthesis; L-leucine biosynthesis; L-leucine from 3-methyl-2-oxobutanoate: step 2/4. In terms of biological role, catalyzes the isomerization between 2-isopropylmalate and 3-isopropylmalate, via the formation of 2-isopropylmaleate. The chain is 3-isopropylmalate dehydratase large subunit from Burkholderia orbicola (strain MC0-3).